A 21-amino-acid chain; its full sequence is thr operon leader peptide (21 aa).

It belongs to the thr operon leader peptide family.

Its function is as follows. This protein is involved in control of the biosynthesis of threonine. The chain is thr operon leader peptide from Shigella boydii serotype 18 (strain CDC 3083-94 / BS512).